Reading from the N-terminus, the 208-residue chain is Imidazoleglycerol-phosphate dehydratase (208 aa).

This sequence belongs to the imidazoleglycerol-phosphate dehydratase family.

It localises to the cytoplasm. The enzyme catalyses D-erythro-1-(imidazol-4-yl)glycerol 3-phosphate = 3-(imidazol-4-yl)-2-oxopropyl phosphate + H2O. The protein operates within amino-acid biosynthesis; L-histidine biosynthesis; L-histidine from 5-phospho-alpha-D-ribose 1-diphosphate: step 6/9. This is Imidazoleglycerol-phosphate dehydratase from Mycobacterium sp. (strain JLS).